A 117-amino-acid polypeptide reads, in one-letter code: Large ribosomal subunit protein bL20 (117 aa).

Belongs to the bacterial ribosomal protein bL20 family.

In terms of biological role, binds directly to 23S ribosomal RNA and is necessary for the in vitro assembly process of the 50S ribosomal subunit. It is not involved in the protein synthesizing functions of that subunit. This Nitratidesulfovibrio vulgaris (strain DSM 19637 / Miyazaki F) (Desulfovibrio vulgaris) protein is Large ribosomal subunit protein bL20.